A 297-amino-acid polypeptide reads, in one-letter code: HTH-type transcriptional regulator ArgP (297 aa).

Positions 4 to 60 constitute an HTH lysR-type domain; it reads PDYRTLQALDAVIRERGFERAAQKLCITQSAVSQRIKQLENMFGQPLLVRTVPPRPT. A DNA-binding region (H-T-H motif) is located at residues 21–40; it reads FERAAQKLCITQSAVSQRIK.

The protein belongs to the LysR transcriptional regulatory family. In terms of assembly, homodimer.

Its function is as follows. Controls the transcription of genes involved in arginine and lysine metabolism. This is HTH-type transcriptional regulator ArgP from Klebsiella pneumoniae (strain 342).